Reading from the N-terminus, the 311-residue chain is tRNA-cytidine(32) 2-sulfurtransferase (311 aa).

The PP-loop motif signature appears at 47–52; that stretch reads SGGKDS. [4Fe-4S] cluster-binding residues include Cys122, Cys125, and Cys213.

This sequence belongs to the TtcA family. Homodimer. Mg(2+) is required as a cofactor. [4Fe-4S] cluster serves as cofactor.

The protein resides in the cytoplasm. The enzyme catalyses cytidine(32) in tRNA + S-sulfanyl-L-cysteinyl-[cysteine desulfurase] + AH2 + ATP = 2-thiocytidine(32) in tRNA + L-cysteinyl-[cysteine desulfurase] + A + AMP + diphosphate + H(+). It participates in tRNA modification. Catalyzes the ATP-dependent 2-thiolation of cytidine in position 32 of tRNA, to form 2-thiocytidine (s(2)C32). The sulfur atoms are provided by the cysteine/cysteine desulfurase (IscS) system. The sequence is that of tRNA-cytidine(32) 2-sulfurtransferase from Escherichia coli O7:K1 (strain IAI39 / ExPEC).